The sequence spans 431 residues: Glutamyl-tRNA reductase (431 aa).

Residues 49–52, Ser109, 114–116, and Gln120 contribute to the substrate site; these read TCNR and EGQ. Cys50 functions as the Nucleophile in the catalytic mechanism. Position 189–194 (189–194) interacts with NADP(+); sequence GAGKMS.

It belongs to the glutamyl-tRNA reductase family. In terms of assembly, homodimer.

The catalysed reaction is (S)-4-amino-5-oxopentanoate + tRNA(Glu) + NADP(+) = L-glutamyl-tRNA(Glu) + NADPH + H(+). It participates in porphyrin-containing compound metabolism; protoporphyrin-IX biosynthesis; 5-aminolevulinate from L-glutamyl-tRNA(Glu): step 1/2. Its pathway is porphyrin-containing compound metabolism; chlorophyll biosynthesis. Its function is as follows. Catalyzes the NADPH-dependent reduction of glutamyl-tRNA(Glu) to glutamate 1-semialdehyde (GSA). The sequence is that of Glutamyl-tRNA reductase from Trichodesmium erythraeum (strain IMS101).